The following is a 776-amino-acid chain: Homoaconitase, mitochondrial (776 aa).

A mitochondrion-targeting transit peptide spans 1–38; it reads MQSRLVSQSGLGRRWAVLRCALSKTYQRRTLTSTRRQF. The [4Fe-4S] cluster site is built by C394, C463, and C466.

The protein belongs to the aconitase/IPM isomerase family. It depends on [4Fe-4S] cluster as a cofactor.

The protein localises to the mitochondrion. It carries out the reaction (2R,3S)-homoisocitrate = cis-homoaconitate + H2O. The protein operates within amino-acid biosynthesis; L-lysine biosynthesis via AAA pathway; L-alpha-aminoadipate from 2-oxoglutarate: step 3/5. Catalyzes the reversible hydration of cis-homoaconitate to (2R,3S)-homoisocitrate, a step in the alpha-aminoadipate pathway for lysine biosynthesis. The sequence is that of Homoaconitase, mitochondrial (lys4) from Emericella nidulans (strain FGSC A4 / ATCC 38163 / CBS 112.46 / NRRL 194 / M139) (Aspergillus nidulans).